Consider the following 431-residue polypeptide: Enolase (431 aa).

Glutamine 162 serves as a coordination point for (2R)-2-phosphoglycerate. Glutamate 204 acts as the Proton donor in catalysis. Positions 241, 284, and 311 each coordinate Mg(2+). The (2R)-2-phosphoglycerate site is built by lysine 336, arginine 365, serine 366, and lysine 387. Lysine 336 serves as the catalytic Proton acceptor.

It belongs to the enolase family. Mg(2+) is required as a cofactor.

It is found in the cytoplasm. The protein resides in the secreted. The protein localises to the cell surface. It carries out the reaction (2R)-2-phosphoglycerate = phosphoenolpyruvate + H2O. The protein operates within carbohydrate degradation; glycolysis; pyruvate from D-glyceraldehyde 3-phosphate: step 4/5. Functionally, catalyzes the reversible conversion of 2-phosphoglycerate (2-PG) into phosphoenolpyruvate (PEP). It is essential for the degradation of carbohydrates via glycolysis. The protein is Enolase of Sorangium cellulosum (strain So ce56) (Polyangium cellulosum (strain So ce56)).